Here is a 371-residue protein sequence, read N- to C-terminus: N-acetyldiaminopimelate deacetylase (371 aa).

Residue aspartate 68 is part of the active site. Glutamate 127 acts as the Proton acceptor in catalysis.

The protein belongs to the peptidase M20A family. N-acetyldiaminopimelate deacetylase subfamily.

It catalyses the reaction N-acetyl-(2S,6S)-2,6-diaminopimelate + H2O = (2S,6S)-2,6-diaminopimelate + acetate. The protein operates within amino-acid biosynthesis; L-lysine biosynthesis via DAP pathway; LL-2,6-diaminopimelate from (S)-tetrahydrodipicolinate (acetylase route): step 3/3. Functionally, catalyzes the conversion of N-acetyl-diaminopimelate to diaminopimelate and acetate. The polypeptide is N-acetyldiaminopimelate deacetylase (Listeria innocua serovar 6a (strain ATCC BAA-680 / CLIP 11262)).